Here is a 730-residue protein sequence, read N- to C-terminus: Stonin-1 (730 aa).

3 disordered regions span residues 1–26 (MYSTNPGSWVTFDDDPAFQSSQKRKD), 38–83 (NGLK…PLST), and 132–159 (SPHVSLPSSHSHTQPTPTLGFTEDAGPQ). Low complexity-rich tracts occupy residues 54–65 (PSSASSTPLSSP) and 132–143 (SPHVSLPSSHSH). In terms of domain architecture, SHD spans 269–402 (GWSFMLRIPE…KLPATAKPKN (134 aa)). Residues 407-710 (EQEICLDIQD…ACYNIQVEIE (304 aa)) form the MHD domain.

This sequence belongs to the Stoned B family.

The protein localises to the cytoplasm. It localises to the membrane. Functionally, may be involved in the endocytic machinery. The polypeptide is Stonin-1 (Ston1) (Mus musculus (Mouse)).